The following is a 690-amino-acid chain: Elongation factor G (690 aa).

Residues E8 to I283 form the tr-type G domain. GTP-binding positions include A17–T24, D81–H85, and N135–D138.

It belongs to the TRAFAC class translation factor GTPase superfamily. Classic translation factor GTPase family. EF-G/EF-2 subfamily.

It is found in the cytoplasm. In terms of biological role, catalyzes the GTP-dependent ribosomal translocation step during translation elongation. During this step, the ribosome changes from the pre-translocational (PRE) to the post-translocational (POST) state as the newly formed A-site-bound peptidyl-tRNA and P-site-bound deacylated tRNA move to the P and E sites, respectively. Catalyzes the coordinated movement of the two tRNA molecules, the mRNA and conformational changes in the ribosome. This is Elongation factor G from Bradyrhizobium diazoefficiens (strain JCM 10833 / BCRC 13528 / IAM 13628 / NBRC 14792 / USDA 110).